The following is a 178-amino-acid chain: ATP synthase subunit delta (178 aa).

Belongs to the ATPase delta chain family. In terms of assembly, F-type ATPases have 2 components, F(1) - the catalytic core - and F(0) - the membrane proton channel. F(1) has five subunits: alpha(3), beta(3), gamma(1), delta(1), epsilon(1). F(0) has three main subunits: a(1), b(2) and c(10-14). The alpha and beta chains form an alternating ring which encloses part of the gamma chain. F(1) is attached to F(0) by a central stalk formed by the gamma and epsilon chains, while a peripheral stalk is formed by the delta and b chains.

Its subcellular location is the cell inner membrane. Functionally, f(1)F(0) ATP synthase produces ATP from ADP in the presence of a proton or sodium gradient. F-type ATPases consist of two structural domains, F(1) containing the extramembraneous catalytic core and F(0) containing the membrane proton channel, linked together by a central stalk and a peripheral stalk. During catalysis, ATP synthesis in the catalytic domain of F(1) is coupled via a rotary mechanism of the central stalk subunits to proton translocation. This protein is part of the stalk that links CF(0) to CF(1). It either transmits conformational changes from CF(0) to CF(1) or is implicated in proton conduction. The polypeptide is ATP synthase subunit delta (Acinetobacter baumannii (strain AB307-0294)).